Consider the following 167-residue polypeptide: Mediator of RNA polymerase II transcription subunit 10 (167 aa).

The tract at residues 53–88 (LSTHTKPQPPSQDEEQKEKQDDTPEGSANDPLLRDI) is disordered.

This sequence belongs to the Mediator complex subunit 10 family. As to quaternary structure, component of the Mediator complex.

The protein resides in the nucleus. Functionally, component of the Mediator complex, a coactivator involved in the regulated transcription of nearly all RNA polymerase II-dependent genes. Mediator functions as a bridge to convey information from gene-specific regulatory proteins to the basal RNA polymerase II transcription machinery. Mediator is recruited to promoters by direct interactions with regulatory proteins and serves as a scaffold for the assembly of a functional preinitiation complex with RNA polymerase II and the general transcription factors. The chain is Mediator of RNA polymerase II transcription subunit 10 (nut2) from Neosartorya fischeri (strain ATCC 1020 / DSM 3700 / CBS 544.65 / FGSC A1164 / JCM 1740 / NRRL 181 / WB 181) (Aspergillus fischerianus).